The sequence spans 406 residues: D-alanyl-D-alanine carboxypeptidase (406 aa).

A signal peptide spans 1 to 31; sequence MVSGTVGRGTALGAVLLALLAVPAQAGTAAA. Catalysis depends on Ser-93, which acts as the Acyl-ester intermediate. Residues 151 to 154, 190 to 192, Arg-316, 330 to 332, and 357 to 358 each bind substrate; these read FAQT, YSN, TGT, and SN. A propeptide spanning residues 381 to 406 is cleaved from the precursor; it reads AKLRSATSSATTVERHEDIAPGIARD. The tract at residues 387–406 is disordered; the sequence is TSSATTVERHEDIAPGIARD. Basic and acidic residues predominate over residues 393–406; sequence VERHEDIAPGIARD.

It belongs to the peptidase S12 family.

It localises to the secreted. The catalysed reaction is Preferential cleavage: (Ac)2-L-Lys-D-Ala-|-D-Ala. Also transpeptidation of peptidyl-alanyl moieties that are N-acyl substituents of D-alanine.. It functions in the pathway cell wall biogenesis; peptidoglycan biosynthesis. Functionally, catalyzes distinct carboxypeptidation and transpeptidation reactions during the last stages of wall peptidoglycan synthesis. Mistaking a beta-lactam antibiotic molecule for a normal substrate (i.e. a D-alanyl-D-alanine-terminated peptide), it becomes immobilized in the form of a long-lived, serine-ester-linked acyl enzyme and thus behave as penicillin-binding protein (PBP). This is D-alanyl-D-alanine carboxypeptidase from Streptomyces sp. (strain R61).